The chain runs to 390 residues: ATP-sensitive inward rectifier potassium channel 11 (390 aa).

The Cytoplasmic segment spans residues 1–65 (MLSRKGIIPE…LQDVFTTLVD (65 aa)). 2 residues coordinate ATP: asparagine 48 and arginine 50. The helical transmembrane segment at 66 to 92 (LKWPHTLLIFTMSFLCSWLLFAMVWWL) threads the bilayer. At 93–116 (IAFAHGDLAPGEGTNVPCVTSIHS) the chain is on the extracellular side. Cysteine 110 and cysteine 142 are disulfide-bonded. Positions 117 to 133 (FSSAFLFSIEVQVTIGF) form an intramembrane region, discontinuously helical; Pore-forming. K(+) contacts are provided by threonine 130 and phenylalanine 133. Positions 130-135 (TIGFGG) match the Selectivity filter motif. The Extracellular segment spans residues 134-142 (GGRMVTEEC). The chain crosses the membrane as a helical span at residues 143–171 (PLAILILIVQNIVGLMINAIMLGCIFMKT). The Cytoplasmic portion of the chain corresponds to 172-390 (AQAHRRAETL…KFSISPDSLS (219 aa)). Arginine 176 provides a ligand contact to a 1,2-diacyl-sn-glycero-3-phospho-(1D-myo-inositol-4,5-bisphosphate). Tyrosine 330 lines the ATP pocket. Threonine 341 carries the post-translational modification Phosphothreonine; by MAPK1. Residue serine 385 is modified to Phosphoserine; by MAPK1.

The protein belongs to the inward rectifier-type potassium channel (TC 1.A.2.1) family. KCNJ11 subfamily. In terms of assembly, homotetramer; the homotetramer binds four ATP molecules (one ATP per subunit). Forms an heterooctamer with ABCC8/SUR1; one KCNJ11 homotetramer interacts with four ABCC8/SUR1 molecules. Interacts with ABCC9/SUR2. In terms of processing, phosphorylation by MAPK1 results in changes in channel gating that destabilize the closed states and reduce the ATP sensitivity.

Its subcellular location is the membrane. It catalyses the reaction K(+)(in) = K(+)(out). KATP channels are regulated by cytoplasmic ATP/ADP ratios; ATP inhibits the channel by closing the pore, while ADP activates the channel. Activated by phosphatidylinositol 4,5-biphosphate (PtdIns(4,5)P2). Inward rectifier potassium channel that forms the pore of ATP-sensitive potassium channels (KATP), regulating potassium permeability as a function of cytoplasmic ATP and ADP concentrations in many different cells. Inward rectifier potassium channels are characterized by a greater tendency to allow potassium to flow into the cell rather than out of it. Their voltage dependence is regulated by the concentration of extracellular potassium; as external potassium is raised, the voltage range of the channel opening shifts to more positive voltages. The inward rectification is mainly due to the blockage of outward current by internal magnesium. Can be blocked by extracellular barium. In pancreatic cells, it forms KATP channels with ABCC8/SUR1. Can form cardiac and smooth muscle-type KATP channels with ABCC9. This Mus musculus (Mouse) protein is ATP-sensitive inward rectifier potassium channel 11 (Kcnj11).